Reading from the N-terminus, the 364-residue chain is Peptide chain release factor 1 (364 aa).

Gln-237 is modified (N5-methylglutamine).

The protein belongs to the prokaryotic/mitochondrial release factor family. In terms of processing, methylated by PrmC. Methylation increases the termination efficiency of RF1.

It localises to the cytoplasm. Its function is as follows. Peptide chain release factor 1 directs the termination of translation in response to the peptide chain termination codons UAG and UAA. The sequence is that of Peptide chain release factor 1 from Rubrobacter xylanophilus (strain DSM 9941 / JCM 11954 / NBRC 16129 / PRD-1).